We begin with the raw amino-acid sequence, 416 residues long: Enterobactin exporter EntS (416 aa).

The Cytoplasmic portion of the chain corresponds to 1-21; the sequence is MNRQSWLLNLSLLKTHPAFRA. Residues 22 to 42 traverse the membrane as a helical segment; it reads VFLARFISIVSLGLLGVAVPV. Topologically, residues 43–55 are periplasmic; it reads QIQMMTHSTWQVG. The chain crosses the membrane as a helical span at residues 56-76; it reads LSVTLTGSAMFVGLMVGGVLA. The Cytoplasmic portion of the chain corresponds to 77 to 83; it reads DRYERKK. A helical transmembrane segment spans residues 84-104; sequence VILLARGTCGIGFIGLCLNAL. The Periplasmic segment spans residues 105 to 109; it reads LPEPS. Residues 110 to 130 form a helical membrane-spanning segment; that stretch reads LLAIYLLGLWDGFFASLGVTA. Residues 131 to 156 lie on the Cytoplasmic side of the membrane; sequence LLAATPALVGRENLMQAGAITMLTVR. A helical membrane pass occupies residues 157–177; sequence LGSVISPMLGGVLLATGGVAW. Position 178 (N178) is a topological domain, periplasmic. Residues 179 to 199 form a helical membrane-spanning segment; that stretch reads YGLAAAGTFITLLPLLSLPAL. Over 200–218 the chain is Cytoplasmic; that stretch reads PPPPQPREHPLKSLLAAFR. A helical membrane pass occupies residues 219–239; the sequence is FLLSSPLIGGIALLGGLLTMA. Residues 240–256 are Periplasmic-facing; the sequence is SAVRVLYPALAINWHMS. The chain crosses the membrane as a helical span at residues 257–277; it reads AAQIGLLYAAIPLGAAVGALT. Topologically, residues 278–287 are cytoplasmic; it reads SGQLAHSVRP. Residues 288-307 traverse the membrane as a helical segment; sequence GLLMLVSTVGSFLAIGVFGL. The Periplasmic segment spans residues 308 to 313; it reads MPVWLL. The chain crosses the membrane as a helical span at residues 314 to 336; it reads GVICLALFGWLSAISSLLQYTLL. Residues 337 to 356 lie on the Cytoplasmic side of the membrane; that stretch reads QTQTPEAMLGRINGLWTAQN. Residues 357–377 traverse the membrane as a helical segment; sequence VTGDAIGAALLGGLGAMMTPV. A378 is a topological domain (periplasmic). The chain crosses the membrane as a helical span at residues 379 to 399; the sequence is SASVSGFGLVIVGLLLMLLLG. Residues 400–416 are Cytoplasmic-facing; it reads ELRRFRQPPPVPDGAPL.

This sequence belongs to the major facilitator superfamily. EntS (TC 2.A.1.38) family.

It localises to the cell inner membrane. In terms of biological role, component of an export pathway for enterobactin. The polypeptide is Enterobactin exporter EntS (Citrobacter koseri (strain ATCC BAA-895 / CDC 4225-83 / SGSC4696)).